The chain runs to 922 residues: DNA gyrase subunit A (922 aa).

A compositionally biased stretch (low complexity) spans 1–14 (MTETPTDGGSTPPS). A disordered region spans residues 1–24 (MTETPTDGGSTPPSDGGGPGGRIE). In terms of domain architecture, Topo IIA-type catalytic spans 49-518 (LPDVRDGLKP…ADGDLSMEDL (470 aa)). Residue tyrosine 137 is the O-(5'-phospho-DNA)-tyrosine intermediate of the active site. The GyrA-box signature appears at 545 to 551 (QRRGGKG). The disordered stretch occupies residues 861–922 (EANGDDELDE…TEPDPGESDG (62 aa)). 2 stretches are compositionally biased toward acidic residues: residues 863–890 (NGDDELDELDESALDEGGAEGGEVDESA) and 912–922 (DTEPDPGESDG).

It belongs to the type II topoisomerase GyrA/ParC subunit family. Heterotetramer, composed of two GyrA and two GyrB chains. In the heterotetramer, GyrA contains the active site tyrosine that forms a transient covalent intermediate with DNA, while GyrB binds cofactors and catalyzes ATP hydrolysis.

The protein localises to the cytoplasm. The enzyme catalyses ATP-dependent breakage, passage and rejoining of double-stranded DNA.. In terms of biological role, a type II topoisomerase that negatively supercoils closed circular double-stranded (ds) DNA in an ATP-dependent manner to modulate DNA topology and maintain chromosomes in an underwound state. Negative supercoiling favors strand separation, and DNA replication, transcription, recombination and repair, all of which involve strand separation. Also able to catalyze the interconversion of other topological isomers of dsDNA rings, including catenanes and knotted rings. Type II topoisomerases break and join 2 DNA strands simultaneously in an ATP-dependent manner. The polypeptide is DNA gyrase subunit A (Nocardioides sp. (strain ATCC BAA-499 / JS614)).